We begin with the raw amino-acid sequence, 130 residues long: Large ribosomal subunit protein bL19 (130 aa).

This sequence belongs to the bacterial ribosomal protein bL19 family.

Functionally, this protein is located at the 30S-50S ribosomal subunit interface and may play a role in the structure and function of the aminoacyl-tRNA binding site. This Burkholderia ambifaria (strain ATCC BAA-244 / DSM 16087 / CCUG 44356 / LMG 19182 / AMMD) (Burkholderia cepacia (strain AMMD)) protein is Large ribosomal subunit protein bL19.